Reading from the N-terminus, the 91-residue chain is Sec-independent protein translocase protein TatAt (91 aa).

Residues 9–29 (FPGLPGGPELLVVLLIVVLLF) form a helical membrane-spanning segment. Positions 48–91 (FQRGREEIEDELQDMTGDDDEDDATSESSADSVSTDSVSTESSN) are disordered. The segment covering 54 to 72 (EIEDELQDMTGDDDEDDAT) has biased composition (acidic residues). The segment covering 73–91 (SESSADSVSTDSVSTESSN) has biased composition (low complexity).

It belongs to the TatA/E family. Forms a complex with TatC. Cytoplasmic and membrane-bound TatA form high-molecular-weight complexes.

It is found in the cell membrane. The protein resides in the cytoplasm. Functionally, part of the twin-arginine translocation (Tat) system that transports large folded proteins containing a characteristic twin-arginine motif in their signal peptide across membranes. TatA could form the protein-conducting channel of the Tat system. This Haloferax volcanii (strain ATCC 29605 / DSM 3757 / JCM 8879 / NBRC 14742 / NCIMB 2012 / VKM B-1768 / DS2) (Halobacterium volcanii) protein is Sec-independent protein translocase protein TatAt.